We begin with the raw amino-acid sequence, 454 residues long: L-cysteine desulfhydrase-like protein lolT1 (454 aa).

Lys227 bears the N6-(pyridoxal phosphate)lysine mark.

Belongs to the class-V pyridoxal-phosphate-dependent aminotransferase family. It depends on pyridoxal 5'-phosphate as a cofactor.

It participates in alkaloid biosynthesis. Its function is as follows. L-cysteine desulfhydrase-like protein; part of the gene cluster that mediates the biosynthesis of loline alkaloids, potent insecticidal agents composed of a pyrrolizidine ring system and an uncommon ether bridge linking carbons 2 and 7. Lolines are structurally differentiated by the various modifications of the L-amino group and include norloline, loline, N-methylloline, N-acetylloline, N-acetylnorloline, and N-formylloline. The first committed step is the condensation of O-acetyl-L-homoserine (derived from L-aspartic acid) and L-proline, probably catalyzed by the gamma-type pyridoxal 5'-phosphate(PLP)-dependent enzyme lolC, to give the diamino diacid, NACPP. Ensuing cyclization, decarboxylation, and acetylation steps yield 1-exo-acetamidopyrrolizidine (AcAP). LolO is required for installation of the ether bridge upon the pathway intermediate, 1-exo-acetamidopyrrolizidine (AcAP). In sequential 2-oxoglutarate- and O(2)-consuming steps, lolO removes hydrogens from C2 and C7 of AcAP to form both carbon-oxygen bonds in N-acetylnorloline (NANL), the precursor to all other lolines. The enzymes lolD, lolE, lolF and lolT have also been proposed to be involved in the ether-bridge installation. Further processing of the exocyclic moiety of NANL by fungal N-acetamidase (LolN), methyltransferase (LolM), and cytochrome P450 (LolP) enzymes, with occasional involvement of a plant acetyltransferase, generates the other known lolines. LolN transforms NANL to norlonine which is monomethylated and dimethylated to respectively lonine and N-methyllonine (NML) by lolM. LolP catalyzes hydroxylation of the methyl group in N-methylloline (NML) and further oxygenation to N-formylloline (NFL). A plant acetyltransferase is responsible for the acetylation of loline to form N-acetylloline (NAL). LolA might interact with aspartate kinase to prevent feedback inhibition of its activity by these end products and thereby promote production of L-homoserine from L-aspartate. In Epichloe uncinata (Endophyte fungus), this protein is L-cysteine desulfhydrase-like protein lolT1.